The following is a 355-amino-acid chain: DNA polymerase IV (355 aa).

Residues 4–185 (IIHIDMDCYF…LSLGKIPGVG (182 aa)) enclose the UmuC domain. Residues Asp8 and Asp103 each coordinate Mg(2+). Glu104 is a catalytic residue.

The protein belongs to the DNA polymerase type-Y family. In terms of assembly, monomer. The cofactor is Mg(2+).

It is found in the cytoplasm. It carries out the reaction DNA(n) + a 2'-deoxyribonucleoside 5'-triphosphate = DNA(n+1) + diphosphate. In terms of biological role, poorly processive, error-prone DNA polymerase involved in untargeted mutagenesis. Copies undamaged DNA at stalled replication forks, which arise in vivo from mismatched or misaligned primer ends. These misaligned primers can be extended by PolIV. Exhibits no 3'-5' exonuclease (proofreading) activity. May be involved in translesional synthesis, in conjunction with the beta clamp from PolIII. This Shewanella amazonensis (strain ATCC BAA-1098 / SB2B) protein is DNA polymerase IV.